The sequence spans 274 residues: Large ribosomal subunit protein uL2 (274 aa).

The disordered stretch occupies residues Val-223–Thr-258.

It belongs to the universal ribosomal protein uL2 family. In terms of assembly, part of the 50S ribosomal subunit. Forms a bridge to the 30S subunit in the 70S ribosome.

Functionally, one of the primary rRNA binding proteins. Required for association of the 30S and 50S subunits to form the 70S ribosome, for tRNA binding and peptide bond formation. It has been suggested to have peptidyltransferase activity; this is somewhat controversial. Makes several contacts with the 16S rRNA in the 70S ribosome. The protein is Large ribosomal subunit protein uL2 of Geotalea daltonii (strain DSM 22248 / JCM 15807 / FRC-32) (Geobacter daltonii).